The primary structure comprises 321 residues: Polyprenyl transferase cle5 (321 aa).

9 helical membrane passes run 26 to 46 (PLLA…HKIT), 57 to 77 (VLSQ…AGMV), 107 to 127 (EALV…SWML), 132 to 149 (VQAA…YPFA), 159 to 179 (IYPQ…GTLA), 189 to 209 (LWAS…WTLY), 232 to 252 (VLAG…VLGA), 262 to 282 (SQWL…GQLV), and 300 to 320 (FALG…GGNG).

The protein belongs to the UbiA prenyltransferase family. The cofactor is Mg(2+).

The protein resides in the membrane. The protein operates within secondary metabolite biosynthesis; terpenoid biosynthesis. Functionally, polyprenyl transferase; part of the cluster A that mediates the biosynthesis of chevalone E and its oxidized derivatives that possess a unique five-membered lactone ring and can synergistically enhance the cytotoxicity of doxorubicin (DOX) in breast cancer cells. Within the pathway, cle5 takes part to the biosynthesis of the molecular scaffold by catalyzing the C-3 geranylgeranylation reaction of triacetic acid lactone (TAL) produced by cle1. The molecular scaffold is commonly biosynthesized by a series of enzymes including the non-reducing polyketide synthase (NR-PKS) cle1 that produces the alpha-pyrone triacetic acid lactone (TAL); The membrane-bound prenyltransferase cle5 that accepts TAL as its substrate to perform a C-3 geranylgeranylation reaction, in which the pathway-dedicated GGPS cle6 is required to provide GGPP, the other substrate of cle5; the FAD-dependent monooxygenase Cle3 that forms an (S)-epoxide ring at the terminal olefin of the geranylgeranyl group; and the terpene cyclase Cle7 that catalyzes the cyclization of the prenyl group that yields the pentacyclic pathway intermediate chevalone E. Chevalone E can derivatize into seven new oxidized analogs by the cytochrome P450 monooxygenases cle2 (acting at C-20) and cle4 (acting at C-11 and C-12). The polypeptide is Polyprenyl transferase cle5 (Aspergillus versicolor).